Consider the following 535-residue polypeptide: Keratin, type II cytoskeletal 79 (535 aa).

Polar residues predominate over residues 1-12; it reads MRSSVSRQTYST. Residues 1–52 form a disordered region; sequence MRSSVSRQTYSTKGGFSSNSASGGSGSQARTSFSSVTVSRSSGSGGGAHCGP. The head stretch occupies residues 1-141; the sequence is MRSSVSRQTY…DPEIQRVRTQ (141 aa). A compositionally biased stretch (low complexity) spans 32 to 42; that stretch reads SFSSVTVSRSS. Over residues 43 to 52 the composition is skewed to gly residues; the sequence is GSGGGAHCGP. The coil 1A stretch occupies residues 142–177; it reads EREQIKTLNNKFASFIDKVRFLEQQNKVLETKWALL. The 316-residue stretch at 142 to 457 folds into the IF rod domain; sequence EREQIKTLNN…KLLESEESRM (316 aa). Residues 178–198 form a linker 1 region; the sequence is QEQGQNLGVTRNNLEPLFEAY. The segment at 199–290 is coil 1B; sequence LGSMRSTLDR…QLYEMELSQV (92 aa). The tract at residues 291–314 is linker 12; it reads QTHVSNTNVVLSMDNNRNLDLDSI. The interval 315–453 is coil 2; the sequence is IAEVKAQYEL…ATYRKLLESE (139 aa). A tail region spans residues 454–535; that stretch reads ESRMSGECPS…TTVKTSSQRY (82 aa).

Belongs to the intermediate filament family. Heterotetramer of two type I and two type II keratins. In terms of tissue distribution, expressed in skeletal muscle, skin and scalp, but not in any other tissues or organs examined.

This chain is Keratin, type II cytoskeletal 79 (KRT79), found in Homo sapiens (Human).